The chain runs to 450 residues: Glucose-6-phosphate isomerase (450 aa).

The residue at position 39 (Thr39) is a Phosphothreonine. Glu291 functions as the Proton donor in the catalytic mechanism. Catalysis depends on residues His312 and Lys426.

The protein belongs to the GPI family.

It is found in the cytoplasm. It carries out the reaction alpha-D-glucose 6-phosphate = beta-D-fructose 6-phosphate. It functions in the pathway carbohydrate biosynthesis; gluconeogenesis. The protein operates within carbohydrate degradation; glycolysis; D-glyceraldehyde 3-phosphate and glycerone phosphate from D-glucose: step 2/4. In terms of biological role, catalyzes the reversible isomerization of glucose-6-phosphate to fructose-6-phosphate. The protein is Glucose-6-phosphate isomerase of Halalkalibacterium halodurans (strain ATCC BAA-125 / DSM 18197 / FERM 7344 / JCM 9153 / C-125) (Bacillus halodurans).